Reading from the N-terminus, the 394-residue chain is NAD(P)H-quinone oxidoreductase subunit H (394 aa).

Belongs to the complex I 49 kDa subunit family. In terms of assembly, NDH-1 can be composed of about 15 different subunits; different subcomplexes with different compositions have been identified which probably have different functions.

Its subcellular location is the cellular thylakoid membrane. It catalyses the reaction a plastoquinone + NADH + (n+1) H(+)(in) = a plastoquinol + NAD(+) + n H(+)(out). It carries out the reaction a plastoquinone + NADPH + (n+1) H(+)(in) = a plastoquinol + NADP(+) + n H(+)(out). NDH-1 shuttles electrons from an unknown electron donor, via FMN and iron-sulfur (Fe-S) centers, to quinones in the respiratory and/or the photosynthetic chain. The immediate electron acceptor for the enzyme in this species is believed to be plastoquinone. Couples the redox reaction to proton translocation, and thus conserves the redox energy in a proton gradient. Cyanobacterial NDH-1 also plays a role in inorganic carbon-concentration. The protein is NAD(P)H-quinone oxidoreductase subunit H of Prochlorococcus marinus (strain SARG / CCMP1375 / SS120).